The following is a 444-amino-acid chain: Probable D-serine dehydratase (444 aa).

Position 118 is an N6-(pyridoxal phosphate)lysine (K118).

It belongs to the serine/threonine dehydratase family. DsdA subfamily. Pyridoxal 5'-phosphate serves as cofactor.

It carries out the reaction D-serine = pyruvate + NH4(+). This chain is Probable D-serine dehydratase, found in Acinetobacter baumannii (strain AB0057).